Reading from the N-terminus, the 600-residue chain is Alpha pinene synthase, chloroplastic (600 aa).

A disordered region spans residues 1 to 26 (MSSISMHARPLNISAANNHHPSWDRR). The transit peptide at 1–31 (MSSISMHARPLNISAANNHHPSWDRRVSKPR) directs the protein to the chloroplast. Mg(2+) is bound by residues aspartate 354, aspartate 358, aspartate 498, and glutamate 506. Residues 354-358 (DDVYD) carry the DDXXD motif motif.

This sequence belongs to the terpene synthase family. Tpsa subfamily. It depends on Mg(2+) as a cofactor. Mn(2+) is required as a cofactor. In terms of tissue distribution, barely detectable in leaves.

The protein resides in the plastid. It is found in the chloroplast. It catalyses the reaction (2E)-geranyl diphosphate = alpha-pinene + diphosphate. Its pathway is secondary metabolite biosynthesis; terpenoid biosynthesis. Functionally, monoterpene synthase involved in the biosynthesis of volatile compounds widely used in aromatherapy and folk medicine, and present in culinary herbs. Mediates the conversion of (2E)-geranyl diphosphate (GPP) into alpha-pinene and, as minor compounds, into alpha-phellandrene, limonene and alpha-terpinolene. In Lavandula stoechas (Butterfly lavender), this protein is Alpha pinene synthase, chloroplastic.